The sequence spans 456 residues: uncharacterized protein (456 aa).

Basic and acidic residues-rich tracts occupy residues 181–210 (DQRK…DKKV) and 217–231 (KEIE…ENEE). The segment at 181-231 (DQRKESIVNDERKKNPEFREKPDKNEDKKVKPPPSLKEIENKGIDHEENEE) is disordered. Residues 216-248 (LKEIENKGIDHEENEEDKKRELMFKLQLLQKQY) are a coiled coil. The chain crosses the membrane as a helical span at residues 347–365 (LALAILFNAVWFIAAKMIM). Residues 383-407 (NKSGTTPNSVSPRTWGNSKSPQSEF) are compositionally biased toward polar residues. The segment at 383–456 (NKSGTTPNSV…MREQGIETLK (74 aa)) is disordered. The span at 441–456 (DESRREMREQGIETLK) shows a compositional bias: basic and acidic residues.

The protein belongs to the IIV-6 067R family.

The protein resides in the membrane. This is an uncharacterized protein from Invertebrate iridescent virus 6 (IIV-6).